Consider the following 589-residue polypeptide: LRR receptor-like serine/threonine-protein kinase FEI 2 (589 aa).

The signal sequence occupies residues 1 to 28; the sequence is MGICLMKRCCSWFLLISFLSALTNENEA. At 29–236 the chain is on the extracellular side; it reads ISPDGEALLS…TGQGGNNPKR (208 aa). LRR repeat units follow at residues 72–96, 97–120, 122–144, 145–168, and 170–193; these read TKRV…LGKL, DQLR…LGNC, ALEG…IGNL, SGLK…LGQL, and RLTK…LLAR. Residues Asn119 and Asn143 are each glycosylated (N-linked (GlcNAc...) asparagine). 3 N-linked (GlcNAc...) asparagine glycosylation sites follow: Asn175, Asn215, and Asn219. Residues 237–257 form a helical membrane-spanning segment; that stretch reads LLISASATVGGLLLVALMCFW. Topologically, residues 258-589 are cytoplasmic; sequence GCFLYKKLGR…PSDFYDSSSD (332 aa). The region spanning 304 to 576 is the Protein kinase domain; it reads LNEEHIIGCG…VVQLLESEVM (273 aa). Residues 310–318 and Lys332 contribute to the ATP site; that span reads IGCGGFGTV. The residue at position 384 (Ser384) is a Phosphoserine. The active-site Proton acceptor is the Asp427. A phosphothreonine mark is found at Thr460, Thr461, and Thr466. Tyr474 bears the Phosphotyrosine mark.

This sequence belongs to the protein kinase superfamily. Ser/Thr protein kinase family. Interacts with the ACC synthases ACS5 and ACS9 but not ACS2, via the kinase domain. Post-translationally, autophosphorylated. As to expression, expressed in the root meristem and elongation zone, and in hypocotyls of etiolated seedlings.

It localises to the cell membrane. The enzyme catalyses L-seryl-[protein] + ATP = O-phospho-L-seryl-[protein] + ADP + H(+). It carries out the reaction L-threonyl-[protein] + ATP = O-phospho-L-threonyl-[protein] + ADP + H(+). Involved in the signaling pathway that regulates cell wall function, including cellulose biosynthesis, likely via an 1-aminocyclopropane-1-carboxylic acid (ACC)-mediated signal (a precursor of ethylene). This is LRR receptor-like serine/threonine-protein kinase FEI 2 (FEI2) from Arabidopsis thaliana (Mouse-ear cress).